Here is a 442-residue protein sequence, read N- to C-terminus: Membrane sensor protein UhpC (442 aa).

Residues 1 to 30 (MLSFLKAPANAPLITDKHEVDARYRYWRRH) are Cytoplasmic-facing. The chain crosses the membrane as a helical span at residues 31-51 (ILITIWLGYALFYFTRKSFNA). The Periplasmic segment spans residues 52–66 (AAPEILASGILTRSD). A helical membrane pass occupies residues 67–87 (IGLLATLFYITYGVSKFVSGI). The Cytoplasmic segment spans residues 88–95 (VSDRSNAR). Residues 96–118 (YFMGIGLIATGVVNILFGFSTSL) traverse the membrane as a helical segment. Over 119–121 (WAF) the chain is Periplasmic. The helical transmembrane segment at 122–144 (ALLWALNAFFQGFGSPVCARLLT) threads the bilayer. At 145 to 162 (AWYSRTERGGWWALWNTA) the chain is on the cytoplasmic side. Residues 163-183 (HNVGGALIPLVMAAVALHYGW) form a helical membrane-spanning segment. R184 is a topological domain (periplasmic). The helical transmembrane segment at 185-205 (VGMMVAGLLAIGVGMVLCWRL) threads the bilayer. The Cytoplasmic segment spans residues 206–244 (RDRPQAIGLPPVGDWRHDALEVAQQQEGAGLSRKEILAK). The helical transmembrane segment at 245-265 (YVLLNPYIWLLSLCYVLVYVV) threads the bilayer. Residues 266–289 (RAAINDWGNLYMSETLGVDLVTAN) are Periplasmic-facing. Residues 290 to 310 (TAVSMFELGGFIGALVAGWGS) form a helical membrane-spanning segment. At 311 to 322 (DKLFNGNRGPMN) the chain is on the cytoplasmic side. The helical transmembrane segment at 323–343 (LIFAAGILLSVGSLWLMPFAS) threads the bilayer. Over 344-347 (YVMQ) the chain is Periplasmic. A helical transmembrane segment spans residues 348–368 (AACFFTTGFFVFGPQMLIGMA). The Cytoplasmic segment spans residues 369–379 (AAECSHKEAAG). Residues 380–400 (AATGFVGLFAYLGASLSGWPL) form a helical membrane-spanning segment. Over 401–410 (AKVLEIWHWT) the chain is Periplasmic. The helical transmembrane segment at 411 to 431 (GFFAVIAIAAGISALLLLPFL) threads the bilayer. Residues 432–442 (NAQAPRETHEA) are Cytoplasmic-facing.

The protein belongs to the major facilitator superfamily. Organophosphate:Pi antiporter (OPA) (TC 2.A.1.4) family.

The protein resides in the cell inner membrane. Part of the UhpABC signaling cascade that controls the expression of the hexose phosphate transporter UhpT. UhpC senses external glucose-6-phosphate and interacts with the histidine kinase UhpB, leading to the stimulation of the autokinase activity of UhpB. The protein is Membrane sensor protein UhpC (uhpC) of Salmonella typhimurium (strain LT2 / SGSC1412 / ATCC 700720).